The primary structure comprises 709 residues: Leucine-rich repeat-containing protein 4B (709 aa).

The N-terminal stretch at 1 to 38 (MAQAHIQGSPCPLLPPGRMSWPQGALLLLWLFSPPLRA) is a signal peptide. The 39-residue stretch at 50-88 (GGGSPPATSCPAACSCSNQASRVICTRRELAEVPASIPV) folds into the LRRNT domain. 9 LRR repeats span residues 89 to 110 (NTRYLNLQENSIQVIRTDTFKH), 113 to 134 (HLEILQLSKNLVRKIEVGAFNG), 137 to 158 (SLNTLELFDNRLTTVPTQAFEY), 161 to 182 (KLRELWLRNNPIESIPSYAFNR), 185 to 207 (SLRRLDLGELKRLEYISEAAFEG), 210 to 231 (NLRYLNLGMCNLKDIPNLTALV), 232 to 253 (RLEELELSGNRLDLIRPGSFQG), 256 to 277 (SLRKLWLMHAQVATIERNAFDD), and 280 to 301 (SLEELNLSHNNLMSLPHDLFTP). In terms of domain architecture, LRRCT spans 313–365 (NPWHCNCDVLWLSWWLKETVPSNTTCCARCHAPAGLKGRYIGELDQSHFTCYA). One can recognise an Ig-like C2-type domain in the interval 366–454 (PVIVEPPTDL…GNTTASATLN (89 aa)). N-linked (GlcNAc...) asparagine glycosylation is found at asparagine 376, asparagine 402, asparagine 424, asparagine 427, and asparagine 446. Cysteine 387 and cysteine 438 are disulfide-bonded. Residues 496 to 552 (TQPGEEAQQPRGTEKEPPGPTTDGAWGGGRPDAAAPASASTTAPAPRSSRPTEKAFT) form a disordered region. Over residues 528-544 (AAAPASASTTAPAPRSS) the composition is skewed to low complexity. A helical transmembrane segment spans residues 575 to 595 (IIIGCFVAITFMAAVMLVAFY). At serine 689 the chain carries Phosphoserine.

As to quaternary structure, interacts with PTPRF. Interacts with DLG4. In terms of processing, N-glycosylated. O-glycosylated; contains sialic acid. Mainly expressed in the brain. Widespread distribution in various brain regions (at protein level). Detected both embryonically and postnatally with stronger expression in postnatal stages.

The protein localises to the membrane. It localises to the presynaptic cell membrane. In terms of biological role, synaptic adhesion protein. Regulates the formation of excitatory synapses. The trans-synaptic adhesion between LRRC4B and PTPRF regulates the formation of excitatory synapses in a bidirectional manner. The polypeptide is Leucine-rich repeat-containing protein 4B (Lrrc4b) (Rattus norvegicus (Rat)).